Consider the following 377-residue polypeptide: Phosphoserine aminotransferase (377 aa).

Arg43 lines the L-glutamate pocket. Residues Trp105, Thr164, Asp189, and Gln212 each contribute to the pyridoxal 5'-phosphate site. Lys213 is subject to N6-(pyridoxal phosphate)lysine. Residue 254–255 coordinates pyridoxal 5'-phosphate; the sequence is NT.

It belongs to the class-V pyridoxal-phosphate-dependent aminotransferase family. SerC subfamily. In terms of assembly, homodimer. The cofactor is pyridoxal 5'-phosphate.

It is found in the cytoplasm. It catalyses the reaction O-phospho-L-serine + 2-oxoglutarate = 3-phosphooxypyruvate + L-glutamate. The enzyme catalyses 4-(phosphooxy)-L-threonine + 2-oxoglutarate = (R)-3-hydroxy-2-oxo-4-phosphooxybutanoate + L-glutamate. The protein operates within amino-acid biosynthesis; L-serine biosynthesis; L-serine from 3-phospho-D-glycerate: step 2/3. Its pathway is cofactor biosynthesis; pyridoxine 5'-phosphate biosynthesis; pyridoxine 5'-phosphate from D-erythrose 4-phosphate: step 3/5. In terms of biological role, catalyzes the reversible conversion of 3-phosphohydroxypyruvate to phosphoserine and of 3-hydroxy-2-oxo-4-phosphonooxybutanoate to phosphohydroxythreonine. This chain is Phosphoserine aminotransferase, found in Bordetella bronchiseptica (strain ATCC BAA-588 / NCTC 13252 / RB50) (Alcaligenes bronchisepticus).